Here is a 254-residue protein sequence, read N- to C-terminus: D-aminoacyl-tRNA deacylase (254 aa).

The segment at Lys61 to Ile85 is disordered. A compositionally biased stretch (polar residues) spans Thr65 to Glu84.

Belongs to the DtdA deacylase family. In terms of assembly, monomer. Requires Zn(2+) as cofactor.

It catalyses the reaction a D-aminoacyl-tRNA + H2O = a tRNA + a D-alpha-amino acid + H(+). The catalysed reaction is glycyl-tRNA(Ala) + H2O = tRNA(Ala) + glycine + H(+). Its function is as follows. D-aminoacyl-tRNA deacylase with broad substrate specificity. By recycling D-aminoacyl-tRNA to D-amino acids and free tRNA molecules, this enzyme counteracts the toxicity associated with the formation of D-aminoacyl-tRNA entities in vivo. This Methanococcus maripaludis (strain C5 / ATCC BAA-1333) protein is D-aminoacyl-tRNA deacylase.